A 32-amino-acid polypeptide reads, in one-letter code: Calcitonin-2 (32 aa).

An intrachain disulfide couples Cys1 to Cys7. Pro32 is subject to Proline amide.

Belongs to the calcitonin family.

The protein resides in the secreted. Functionally, causes a rapid but short-lived drop in the level of calcium and phosphate in blood by promoting the incorporation of those ions in the bones. The chain is Calcitonin-2 from Oncorhynchus gorbuscha (Pink salmon).